A 63-amino-acid polypeptide reads, in one-letter code: DNA gyrase inhibitor YacG (63 aa).

The Zn(2+) site is built by C10, C13, C29, and C33.

Belongs to the DNA gyrase inhibitor YacG family. Interacts with GyrB. Requires Zn(2+) as cofactor.

Inhibits all the catalytic activities of DNA gyrase by preventing its interaction with DNA. Acts by binding directly to the C-terminal domain of GyrB, which probably disrupts DNA binding by the gyrase. The chain is DNA gyrase inhibitor YacG from Chromobacterium violaceum (strain ATCC 12472 / DSM 30191 / JCM 1249 / CCUG 213 / NBRC 12614 / NCIMB 9131 / NCTC 9757 / MK).